The following is a 135-amino-acid chain: Histone H2B.4 (135 aa).

2 stretches are compositionally biased toward basic and acidic residues: residues 1–12 (MAPKAAEKKPVE) and 23–35 (EKKV…GGEK). A disordered region spans residues 1-43 (MAPKAAEKKPVEKTPAVKKPKAEKKVPTSKEGGEKKGKKKSKK). 2 positions are modified to N6-acetyllysine: Lys-8 and Lys-24. Lys-131 is covalently cross-linked (Glycyl lysine isopeptide (Lys-Gly) (interchain with G-Cter in ubiquitin)).

The protein belongs to the histone H2B family. As to quaternary structure, the nucleosome is a histone octamer containing two molecules each of H2A, H2B, H3 and H4 assembled in one H3-H4 heterotetramer and two H2A-H2B heterodimers. The octamer wraps approximately 147 bp of DNA. Post-translationally, can be acetylated to form H2BK6ac and H2BK33ac. Monoubiquitinated to form H2BK143ub1; may give a specific tag for epigenetic transcriptional activation. Expressed preferentially in meristematic tissues.

The protein localises to the nucleus. The protein resides in the chromosome. Core component of nucleosome. Nucleosomes wrap and compact DNA into chromatin, limiting DNA accessibility to the cellular machineries which require DNA as a template. Histones thereby play a central role in transcription regulation, DNA repair, DNA replication and chromosomal stability. DNA accessibility is regulated via a complex set of post-translational modifications of histones, also called histone code, and nucleosome remodeling. The chain is Histone H2B.4 (TH153) from Triticum aestivum (Wheat).